The chain runs to 431 residues: 5-methylthioadenosine/S-adenosylhomocysteine deaminase (431 aa).

Zn(2+)-binding residues include His60 and His62. Substrate is bound by residues Glu89 and His182. His209 contacts Zn(2+). 2 residues coordinate substrate: Glu212 and Asp297. Residue Asp297 participates in Zn(2+) binding.

The protein belongs to the metallo-dependent hydrolases superfamily. MTA/SAH deaminase family. The cofactor is Zn(2+).

It carries out the reaction S-adenosyl-L-homocysteine + H2O + H(+) = S-inosyl-L-homocysteine + NH4(+). The catalysed reaction is S-methyl-5'-thioadenosine + H2O + H(+) = S-methyl-5'-thioinosine + NH4(+). Functionally, catalyzes the deamination of 5-methylthioadenosine and S-adenosyl-L-homocysteine into 5-methylthioinosine and S-inosyl-L-homocysteine, respectively. Is also able to deaminate adenosine. In Natronomonas pharaonis (strain ATCC 35678 / DSM 2160 / CIP 103997 / JCM 8858 / NBRC 14720 / NCIMB 2260 / Gabara) (Halobacterium pharaonis), this protein is 5-methylthioadenosine/S-adenosylhomocysteine deaminase.